Here is a 627-residue protein sequence, read N- to C-terminus: (-)-alpha-terpineol synthase, chloroplastic (627 aa).

Residues 1 to 52 (MDLISVLPSASKSCVCLHKPLSSSTHKLKPFCKTIRILVMPRRWEFARPSMS) constitute a chloroplast transit peptide. The Mg(2+) site is built by Asp378, Asp382, and Asp530. Residues 378-382 (DDMYD) carry the DDXXD motif motif.

It belongs to the terpene synthase family. Tpsd subfamily. The cofactor is Mg(2+). Mn(2+) serves as cofactor.

It is found in the plastid. It localises to the chloroplast. It carries out the reaction (2E)-geranyl diphosphate + H2O = (S)-alpha-terpineol + diphosphate. Its pathway is terpene metabolism; oleoresin biosynthesis. In terms of biological role, involved in defensive oleoresin formation in conifers in response to insect attack or other injury. Involved in monoterpene (C10) olefins biosynthesis. Produces 57.3% alpha-terpineol (15.1% (+)/84.9% (-)), 27.6% limonene (25.2% (+)/74.8% (-)), 8% terpinolene, 4.7% beta-pinene (14.8% (+)/85.2% (-)), 1.3% alpha-pinene (100% (+)) and 1.1% myrcene. This is (-)-alpha-terpineol synthase, chloroplastic (PT10) from Pinus taeda (Loblolly pine).